The primary structure comprises 407 residues: Cell division control protein 12 (407 aa).

The residue at position 2 (serine 2) is an N-acetylserine. A Septin-type G domain is found at 31–314 (EGGTFTVMLC…ETYRRLRLEG (284 aa)). A G1 motif region spans residues 41–48 (GESGLGKT). GTP is bound by residues 41 to 48 (GESGLGKT), threonine 75, glycine 101, 180 to 188 (KADTLTAQE), glycine 247, and arginine 263. Residues 98-101 (DTPG) are G3 motif. The G4 motif stretch occupies residues 179–182 (AKAD). A coiled-coil region spans residues 344-406 (EEENALKKYF…KSLQVKKSHL (63 aa)).

It belongs to the TRAFAC class TrmE-Era-EngA-EngB-Septin-like GTPase superfamily. Septin GTPase family. As to quaternary structure, component of the septin complex which consists of CDC3, CDC10, CDC11, CDC12 and probably SHS1 and rearranges to a cortical collar of highly ordered filaments at the mother-bud-neck. A complex formed by CDC3, CDC10, CDC11 and CDC12 is capable of forming long filaments in vitro and the components seem to be present in a 2:2:2:2 arrangement in vivo. The filaments are proposed to be formed by the end-to-end polymerization of CDC3-CDC12-CDC11 complexes with CDC10 serving as a bridge to bundle the polymers into paired filaments. Component of the GIN4 complex composed of at least BNI5, CDC3, CDC10, CDC11, CDC12, GIN4, NAP1 and SHS1. Self-associates. Interacts with SYP1.

It is found in the membrane. It localises to the bud neck. In terms of biological role, septins are GTPases involved in cytokinesis that assemble early in the cell cycle as a patch at the incipient bud site and form a ring approximate 15 minutes before bud emergence, which transforms into an hour-glass shaped collar of cortical filaments that spans both sides of the mother-bud neck. This collar persists until just before cytokinesis, when it splits into two rings that occupy opposite sides of the neck. The septins at the bud neck serve as a structural scaffold that recruits different components involved in diverse processes at specific stages during the cell cycle. Many proteins bind asymmetrically to the septin collar. The septin assembly is regulated by protein kinases GIN4 and/or CLA4. May act by recruiting MYO1 and HOF1, a protein involved in septation, to the site of cleavage. Septins are also involved in cell morphogenesis, bud site selection, chitin deposition, cell cycle regulation, cell compartmentalization and spore wall formation. The polypeptide is Cell division control protein 12 (CDC12) (Saccharomyces cerevisiae (strain ATCC 204508 / S288c) (Baker's yeast)).